The primary structure comprises 197 residues: CRISPR system CMR subunit Cmr7 1 (197 aa).

The protein belongs to the CRISPR system Cmr7 family. As to quaternary structure, possible homodimer. Part of the CMR ribonucleoprotein complex, consisting of crRNA plus Cmr1/Cmr2/Cmr3/Cmr4/Cmr5/Cmr6 at 1:1 and possibly 3 Cmr7 dimers. A Cmr2/Cmr3/Cmr7 subcomplex without crRNA can also be isolated. It does not cleave target RNA.

The protein resides in the cytoplasm. Functionally, CRISPR (clustered regularly interspaced short palindromic repeat) is an adaptive immune system that provides protection against mobile genetic elements (viruses, transposable elements and conjugative plasmids). CRISPR clusters contain spacers, sequences complementary to antecedent mobile elements, and target invading nucleic acids. CRISPR clusters are transcribed and processed into CRISPR RNA (crRNA). The CMR complex degrades RNA complementary to the crRNA (target RNA) within UA dinucleotides, generating 3'-OH and 5'-phosphate ends. Activity is dependent on the 8 nt long 5' tag in the crRNA, an unpaired 3' flag on the target RNA, and is stimulated by ATP. Some cleavage of the guide crRNA can also be observed. This chain is CRISPR system CMR subunit Cmr7 1 (cmr7A), found in Saccharolobus solfataricus (strain ATCC 35092 / DSM 1617 / JCM 11322 / P2) (Sulfolobus solfataricus).